A 440-amino-acid chain; its full sequence is Transposon Ty1-DR1 Gag polyprotein (440 aa).

Polar residues-rich tracts occupy residues 1–10, 48–60, and 127–152; these read MESQQLSNYP, TKAN…TPAS, and QSQF…GNTF. 3 disordered regions span residues 1 to 93, 126 to 173, and 352 to 440; these read MESQ…MMTQ, PQSQ…RPPP, and GSRN…PGTY. Over residues 153 to 165 the composition is skewed to low complexity; sequence TDSSSADSDMTST. The interval 299–401 is RNA-binding; the sequence is NNGIHINNKV…NSKSKTARAH (103 aa). Residues 402-418 show a composition bias toward low complexity; it reads NVSTSNNSPSTDNDSIS. Ser-416 carries the post-translational modification Phosphoserine. Polar residues predominate over residues 419–428; the sequence is KSTTEPIQLN. Positions 429-440 are enriched in basic and acidic residues; sequence NKHDLHLRPGTY.

As to quaternary structure, homotrimer.

The protein localises to the cytoplasm. Capsid protein (CA) is the structural component of the virus-like particle (VLP), forming the shell that encapsulates the retrotransposons dimeric RNA genome. The particles are assembled from trimer-clustered units and there are holes in the capsid shells that allow for the diffusion of macromolecules. CA also has nucleocapsid-like chaperone activity, promoting primer tRNA(i)-Met annealing to the multipartite primer-binding site (PBS), dimerization of Ty1 RNA and initiation of reverse transcription. This is Transposon Ty1-DR1 Gag polyprotein (TY1A-DR1) from Saccharomyces cerevisiae (strain ATCC 204508 / S288c) (Baker's yeast).